A 555-amino-acid chain; its full sequence is Developmental regulatory protein wetA (555 aa).

4 disordered regions span residues 113-171 (TGHS…LMRS), 250-310 (QSPA…SESL), 419-488 (TQAV…RGGK), and 508-531 (GVAP…RRRK). Polar residues-rich tracts occupy residues 162-171 (QSFSPGLMRS), 259-281 (PSAN…SALT), 293-310 (SPHS…SESL), 419-431 (TQAV…SPSI), and 464-488 (SGQS…RGGK).

This sequence belongs to the wetA family.

Functionally, brlA, abaA and wetA are pivotal regulators of conidiophore development and conidium maturation. They act individually and together to regulate their own expression and that of numerous other sporulation-specific genes. Responsible for activating a set of genes whose products make up the final two conidial wall layers or direct their assembly and, through this activity, is responsible for acquisition of spore dormancy. This chain is Developmental regulatory protein wetA, found in Emericella nidulans (strain FGSC A4 / ATCC 38163 / CBS 112.46 / NRRL 194 / M139) (Aspergillus nidulans).